Reading from the N-terminus, the 1396-residue chain is DNA-directed RNA polymerase subunit beta' (1396 aa).

Zn(2+)-binding residues include cysteine 70, cysteine 72, cysteine 85, and cysteine 88. 3 residues coordinate Mg(2+): aspartate 460, aspartate 462, and aspartate 464. Positions 814, 888, 895, and 898 each coordinate Zn(2+).

It belongs to the RNA polymerase beta' chain family. In terms of assembly, the RNAP catalytic core consists of 2 alpha, 1 beta, 1 beta' and 1 omega subunit. When a sigma factor is associated with the core the holoenzyme is formed, which can initiate transcription. It depends on Mg(2+) as a cofactor. Zn(2+) serves as cofactor.

The enzyme catalyses RNA(n) + a ribonucleoside 5'-triphosphate = RNA(n+1) + diphosphate. Its function is as follows. DNA-dependent RNA polymerase catalyzes the transcription of DNA into RNA using the four ribonucleoside triphosphates as substrates. The protein is DNA-directed RNA polymerase subunit beta' of Chromobacterium violaceum (strain ATCC 12472 / DSM 30191 / JCM 1249 / CCUG 213 / NBRC 12614 / NCIMB 9131 / NCTC 9757 / MK).